Here is a 324-residue protein sequence, read N- to C-terminus: NADH-ubiquinone oxidoreductase chain 1 (324 aa).

A run of 8 helical transmembrane segments spans residues 10 to 30 (MIMT…LTLV), 76 to 96 (FLFI…WTPL), 107 to 127 (LGLL…LWSG), 143 to 163 (VAQT…TIML), 178 to 198 (PMYL…STLA), 229 to 249 (LFFL…ITLF), 260 to 280 (ELFS…FLWI), and 300 to 320 (FLPL…SYAG).

The protein belongs to the complex I subunit 1 family.

It is found in the mitochondrion inner membrane. The enzyme catalyses a ubiquinone + NADH + 5 H(+)(in) = a ubiquinol + NAD(+) + 4 H(+)(out). Its function is as follows. Core subunit of the mitochondrial membrane respiratory chain NADH dehydrogenase (Complex I) that is believed to belong to the minimal assembly required for catalysis. Complex I functions in the transfer of electrons from NADH to the respiratory chain. The immediate electron acceptor for the enzyme is believed to be ubiquinone. In Coturnix japonica (Japanese quail), this protein is NADH-ubiquinone oxidoreductase chain 1 (MT-ND1).